The primary structure comprises 1445 residues: ABC-type transporter FGSG_00046 (1445 aa).

Transmembrane regions (helical) follow at residues Leu21–Val41, Leu77–Leu97, Pro119–Val138, Ile150–Leu170, Glu187–Gly207, Thr255–Leu277, Tyr297–Ala317, Leu368–Leu388, Val392–Leu412, Val481–Met501, and Ser520–Phe540. One can recognise an ABC transmembrane type-1 1 domain in the interval Gly259–Ser541. One can recognise an ABC transporter 1 domain in the interval Ile595–Arg821. Gly627 to Ser634 provides a ligand contact to ATP. Residues Arg803–Ala850 are disordered. Over residues Asn824–His835 the composition is skewed to basic and acidic residues. The next 6 membrane-spanning stretches (helical) occupy residues Gly868 to Phe888, Ile912 to Phe932, Ile1004 to Met1024, Ser1026 to Ile1046, Leu1116 to Ile1136, and Ile1147 to Trp1167. An ABC transmembrane type-1 2 domain is found at His974–Ala1173. The region spanning Ile1210–Ser1441 is the ABC transporter 2 domain. ATP is bound at residue Gly1244–Thr1251.

Belongs to the ABC transporter superfamily. ABCC family.

The protein resides in the cell membrane. In terms of biological role, ABC-type transporter; part of the gene cluster that mediates the biosynthesis of gramillins A and B, bicyclic lipopeptides that induce cell death in maize leaves but not in wheat leaves. May be involved in the secretion of gramillins. The polypeptide is ABC-type transporter FGSG_00046 (Gibberella zeae (strain ATCC MYA-4620 / CBS 123657 / FGSC 9075 / NRRL 31084 / PH-1) (Wheat head blight fungus)).